The sequence spans 88 residues: U18-hexatoxin-Hi1a (88 aa).

The first 17 residues, 1 to 17 (MRIYSLLILSFLLLASA), serve as a signal peptide directing secretion. Positions 18–47 (VLINSAEMPRSEKSLLYSIMQGREDSEEGR) are excised as a propeptide. 4 disulfides stabilise this stretch: C48–C63, C55–C69, C62–C81, and C71–C79.

It belongs to the neurotoxin 07 (Beta/delta-agtx) family. 02 (aga-3) subfamily. In terms of tissue distribution, expressed by the venom gland.

The protein resides in the secreted. Weak insecticidal toxin with probable ion channel impairing activity. In vivo, induces paralysis when injected into sheep blowflies (L.cuprina). Shows weak toxicity, since it is only toxic at high doses, and flies recover within 24 hours. The chain is U18-hexatoxin-Hi1a from Hadronyche infensa (Fraser island funnel-web spider).